Here is a 257-residue protein sequence, read N- to C-terminus: 1-(5-phosphoribosyl)-5-[(5-phosphoribosylamino)methylideneamino] imidazole-4-carboxamide isomerase (257 aa).

The Proton acceptor role is filled by aspartate 8. Aspartate 129 acts as the Proton donor in catalysis.

This sequence belongs to the HisA/HisF family.

Its subcellular location is the cytoplasm. The catalysed reaction is 1-(5-phospho-beta-D-ribosyl)-5-[(5-phospho-beta-D-ribosylamino)methylideneamino]imidazole-4-carboxamide = 5-[(5-phospho-1-deoxy-D-ribulos-1-ylimino)methylamino]-1-(5-phospho-beta-D-ribosyl)imidazole-4-carboxamide. It participates in amino-acid biosynthesis; L-histidine biosynthesis; L-histidine from 5-phospho-alpha-D-ribose 1-diphosphate: step 4/9. The sequence is that of 1-(5-phosphoribosyl)-5-[(5-phosphoribosylamino)methylideneamino] imidazole-4-carboxamide isomerase from Trichodesmium erythraeum (strain IMS101).